The sequence spans 627 residues: Mitochondrial distribution and morphology protein 34 (627 aa).

The region spanning 1–195 (MAFNFNWSPL…LPAIIHRLSL (195 aa)) is the SMP-LTD domain. Disordered stretches follow at residues 209–230 (SAQV…NPPQ), 332–470 (ASLA…RTSP), 486–557 (LQRQ…SRPS), and 586–627 (RIQD…AYRH). Low complexity-rich tracts occupy residues 215–225 (PSLDGPGLDPL) and 332–341 (ASLASSSHSR). A compositionally biased stretch (basic residues) spans 360–372 (RHSKAHARKRKKR). Basic and acidic residues predominate over residues 373 to 384 (VVDLRRRPKSAD). Positions 390–412 (SGESAYTETSTTTSAVSVFSGST) are enriched in low complexity. The span at 436–451 (TLRDRIAARDDAERNS) shows a compositional bias: basic and acidic residues. Residues 528–557 (PNASNNYTSSSSPSARDPQQQQPQQLSRPS) show a composition bias toward low complexity.

Belongs to the MDM34 family. As to quaternary structure, component of the ER-mitochondria encounter structure (ERMES) or MDM complex, composed of MMM1, MDM10, MDM12 and MDM34.

The protein resides in the mitochondrion outer membrane. Component of the ERMES/MDM complex, which serves as a molecular tether to connect the endoplasmic reticulum (ER) and mitochondria. Components of this complex are involved in the control of mitochondrial shape and protein biogenesis, and function in nonvesicular lipid trafficking between the ER and mitochondria. MDM34 is required for the interaction of the ER-resident membrane protein MMM1 and the outer mitochondrial membrane-resident beta-barrel protein MDM10. The chain is Mitochondrial distribution and morphology protein 34 from Blastomyces gilchristii (strain SLH14081) (Blastomyces dermatitidis).